Here is a 339-residue protein sequence, read N- to C-terminus: NADH-quinone oxidoreductase subunit H (339 aa).

A run of 8 helical transmembrane segments spans residues 9–29, 82–102, 115–135, 161–181, 187–207, 235–255, 275–295, and 311–331; these read IFPLIIIALKVVAITIPLILC, ILFVLAPMITFILSLIGWAVI, VGVLYILAISSLSVYGIIIAG, MGLVIITVLLTTGTLNLSQIV, MPWWIDLMLMPMGVVFFISVL, MGFALFFLGEYANMILVSAMT, IPGFFWFVFKVGFLLFCFLWI, and GWKVFLPLTLFWVVLVSSVLI.

The protein belongs to the complex I subunit 1 family. NDH-1 is composed of 14 different subunits. Subunits NuoA, H, J, K, L, M, N constitute the membrane sector of the complex.

Its subcellular location is the cell inner membrane. It catalyses the reaction a quinone + NADH + 5 H(+)(in) = a quinol + NAD(+) + 4 H(+)(out). NDH-1 shuttles electrons from NADH, via FMN and iron-sulfur (Fe-S) centers, to quinones in the respiratory chain. The immediate electron acceptor for the enzyme in this species is believed to be ubiquinone. Couples the redox reaction to proton translocation (for every two electrons transferred, four hydrogen ions are translocated across the cytoplasmic membrane), and thus conserves the redox energy in a proton gradient. This subunit may bind ubiquinone. In Rickettsia bellii (strain OSU 85-389), this protein is NADH-quinone oxidoreductase subunit H.